We begin with the raw amino-acid sequence, 433 residues long: 26S proteasome regulatory subunit 7 (433 aa).

Residues 1 to 22 (MPDYLGADQRKTKEDEKDDKPI) are disordered. Residues 8 to 22 (DQRKTKEDEKDDKPI) are compositionally biased toward basic and acidic residues. Lysine 116 carries the post-translational modification N6-acetyllysine. Position 216–223 (216–223 (GPPGTGKT)) interacts with ATP. Lysine 422 is modified (N6-acetyllysine).

It belongs to the AAA ATPase family. Component of the 19S proteasome regulatory particle complex. The 26S proteasome consists of a 20S core particle (CP) and two 19S regulatory subunits (RP). The regulatory particle is made of a lid composed of 9 subunits, a base containing 6 ATPases including PSMC2 and few additional components. Interacts with NDC80 and SQSTM1. Interacts with PAAF1. Interacts with TRIM5. Post-translationally, monoubiquitinated by RNF181. Phosphorylated. Dephosphorylated by UBLCP1 which impairs PSMC2 ATPase activity and disrupts 26S proteasome assembly.

The protein localises to the cytoplasm. Component of the 26S proteasome, a multiprotein complex involved in the ATP-dependent degradation of ubiquitinated proteins. This complex plays a key role in the maintenance of protein homeostasis by removing misfolded or damaged proteins, which could impair cellular functions, and by removing proteins whose functions are no longer required. Therefore, the proteasome participates in numerous cellular processes, including cell cycle progression, apoptosis, or DNA damage repair. PSMC2 belongs to the heterohexameric ring of AAA (ATPases associated with diverse cellular activities) proteins that unfolds ubiquitinated target proteins that are concurrently translocated into a proteolytic chamber and degraded into peptides. The polypeptide is 26S proteasome regulatory subunit 7 (Psmc2) (Rattus norvegicus (Rat)).